The sequence spans 245 residues: Orotidine 5'-phosphate decarboxylase (245 aa).

Substrate is bound by residues Asp22, Lys44, 71–80 (DLKFHDIPNT), Thr131, Arg192, Gln201, Gly221, and Arg222. Lys73 acts as the Proton donor in catalysis.

It belongs to the OMP decarboxylase family. Type 1 subfamily. As to quaternary structure, homodimer.

It catalyses the reaction orotidine 5'-phosphate + H(+) = UMP + CO2. Its pathway is pyrimidine metabolism; UMP biosynthesis via de novo pathway; UMP from orotate: step 2/2. Its function is as follows. Catalyzes the decarboxylation of orotidine 5'-monophosphate (OMP) to uridine 5'-monophosphate (UMP). The chain is Orotidine 5'-phosphate decarboxylase from Yersinia pseudotuberculosis serotype O:1b (strain IP 31758).